The following is a 403-amino-acid chain: Aspartic endopeptidase PEP1 (403 aa).

A signal peptide spans 1–20 (MVQISQIGAVLAVCSTLTVA). A propeptide spans 21–67 (APTKGKARFNVPQVAVPMKAVHHPAVAYARALHKFGMKVPKAVSDAA) (activation peptide). A Peptidase A1 domain is found at 82–400 (YVTQVTVGQG…DTEGPRIGFA (319 aa)). Residue D98 is part of the active site. N-linked (GlcNAc...) asparagine glycans are attached at residues N159 and N270. The active site involves D293. C329 and C361 are oxidised to a cystine.

This sequence belongs to the peptidase A1 family.

The protein localises to the secreted. It carries out the reaction Hydrolysis of proteins with broad specificity. Generally favors hydrophobic residues in P1 and P1', but also accepts Lys in P1, which leads to activation of trypsinogen. Does not clot milk.. In terms of biological role, secreted aspartic endopeptidase that allows assimilation of proteinaceous substrates. Can catalyze hydrolysis of the major structural proteins of basement membrane, elastin, collagen, and laminin. Thought to play a significant role in virulence. Its function is as follows. Can catalyze hydrolysis of the major structural proteins of basement membrane, elastin, collagen, and laminin. Thought to play a significant role in virulence. This is Aspartic endopeptidase PEP1 (PEP1) from Trichophyton verrucosum (strain HKI 0517).